Reading from the N-terminus, the 53-residue chain is U1-poneritoxin-Dq5a (53 aa).

Residues 1-23 form the signal peptide; sequence MNIRLMFTLIALLVLTVSFSGAN. Disulfide bonds link C25/C42, C32/C47, and C41/C52.

Expressed by the venom gland.

It localises to the secreted. Functionally, may have neurotoxic activity. The polypeptide is U1-poneritoxin-Dq5a (Dinoponera quadriceps (South American ant)).